The sequence spans 118 residues: Large ribosomal subunit protein bL19 (118 aa).

The protein belongs to the bacterial ribosomal protein bL19 family.

Functionally, this protein is located at the 30S-50S ribosomal subunit interface and may play a role in the structure and function of the aminoacyl-tRNA binding site. The protein is Large ribosomal subunit protein bL19 of Geotalea uraniireducens (strain Rf4) (Geobacter uraniireducens).